The primary structure comprises 567 residues: Galectin-3-binding protein A (567 aa).

The signal sequence occupies residues 1–16 (MIMYIIWALLFIPVSA). Positions 34-133 (VRLVGGLPSS…HQEDAGVVCD (100 aa)) constitute an SRCR domain. Intrachain disulfides connect Cys58-Cys122, Cys71-Cys132, and Cys102-Cys112. N-linked (GlcNAc...) asparagine glycosylation is found at Asn137, Asn197, Asn200, and Asn204. Positions 272–374 (PVSMYEYGLR…IPVDKLYDIQ (103 aa)) constitute a BACK domain. Residues Asn412, Asn432, and Asn543 are each glycosylated (N-linked (GlcNAc...) asparagine).

Its subcellular location is the secreted. The protein localises to the extracellular space. It is found in the extracellular matrix. Functionally, promotes integrin-mediated cell adhesion. The sequence is that of Galectin-3-binding protein A (lgals3bpa) from Danio rerio (Zebrafish).